A 162-amino-acid polypeptide reads, in one-letter code: Interleukin-15 (162 aa).

An N-terminal signal peptide occupies residues 1-29 (MRILKPHLRSTSIQCYLCLLLNSHFLTEA). Positions 30–48 (GIHVFILGCISAGLPKTEA) are excised as a propeptide. Cystine bridges form between C83–C133 and C90–C136. N108 carries an N-linked (GlcNAc...) asparagine glycan.

This sequence belongs to the IL-15/IL-21 family.

The protein resides in the secreted. Functionally, cytokine that plays a major role in the development of inflammatory and protective immune responses to microbial invaders and parasites by modulating immune cells of both the innate and adaptive immune systems. Stimulates the proliferation of natural killer cells, T-cells and B-cells and promotes the secretion of several cytokines. In monocytes, induces the production of IL8 and monocyte chemotactic protein 1/CCL2, two chemokines that attract neutrophils and monocytes respectively to sites of infection. Unlike most cytokines, which are secreted in soluble form, IL15 is expressed in association with its high affinity IL15RA on the surface of IL15-producing cells and delivers signals to target cells that express IL2RB and IL2RG receptor subunits. Binding to its receptor triggers the phosphorylation of JAK1 and JAK3 and the recruitment and subsequent phosphorylation of signal transducer and activator of transcription-3/STAT3 and STAT5. In mast cells, induces the rapid tyrosine phosphorylation of STAT6 and thereby controls mast cell survival and release of cytokines such as IL4. This chain is Interleukin-15 (IL15), found in Ailuropoda melanoleuca (Giant panda).